The sequence spans 363 residues: 3-isopropylmalate dehydrogenase (363 aa).

78–91 is an NAD(+) binding site; the sequence is GPKWEHLPPDQQPE. The substrate site is built by arginine 99, arginine 109, arginine 138, and aspartate 227. Mg(2+) contacts are provided by aspartate 227, aspartate 251, and aspartate 255. 285-297 is an NAD(+) binding site; the sequence is GSAPDIAGKNIAN.

It belongs to the isocitrate and isopropylmalate dehydrogenases family. LeuB type 1 subfamily. As to quaternary structure, homodimer. The cofactor is Mg(2+). Mn(2+) serves as cofactor.

It localises to the cytoplasm. It catalyses the reaction (2R,3S)-3-isopropylmalate + NAD(+) = 4-methyl-2-oxopentanoate + CO2 + NADH. Its pathway is amino-acid biosynthesis; L-leucine biosynthesis; L-leucine from 3-methyl-2-oxobutanoate: step 3/4. Its function is as follows. Catalyzes the oxidation of 3-carboxy-2-hydroxy-4-methylpentanoate (3-isopropylmalate) to 3-carboxy-4-methyl-2-oxopentanoate. The product decarboxylates to 4-methyl-2 oxopentanoate. The sequence is that of 3-isopropylmalate dehydrogenase from Escherichia coli O157:H7.